Reading from the N-terminus, the 333-residue chain is L-lactate dehydrogenase A chain (333 aa).

Residues 30–58 (GMVG…MEDK) and Arg100 contribute to the NAD(+) site. Substrate contacts are provided by Arg107, Asn139, and Arg170. Asn139 provides a ligand contact to NAD(+). His194 acts as the Proton acceptor in catalysis. Thr249 is a binding site for substrate.

This sequence belongs to the LDH/MDH superfamily. LDH family. As to quaternary structure, homotetramer.

The protein resides in the cytoplasm. It catalyses the reaction (S)-lactate + NAD(+) = pyruvate + NADH + H(+). Its pathway is fermentation; pyruvate fermentation to lactate; (S)-lactate from pyruvate: step 1/1. This Cyprinus carpio (Common carp) protein is L-lactate dehydrogenase A chain (ldha).